The chain runs to 680 residues: DNA ligase (680 aa).

NAD(+) contacts are provided by residues 35-39, 86-87, and Glu-111; these read DADFD and SL. Lys-113 functions as the N6-AMP-lysine intermediate in the catalytic mechanism. Positions 134, 174, 290, and 314 each coordinate NAD(+). Zn(2+) contacts are provided by Cys-408, Cys-411, Cys-427, and Cys-433. A BRCT domain is found at 597 to 680; sequence VAEQTLEGLT…RLLNTGSADE (84 aa).

Belongs to the NAD-dependent DNA ligase family. LigA subfamily. Mg(2+) serves as cofactor. Mn(2+) is required as a cofactor.

It catalyses the reaction NAD(+) + (deoxyribonucleotide)n-3'-hydroxyl + 5'-phospho-(deoxyribonucleotide)m = (deoxyribonucleotide)n+m + AMP + beta-nicotinamide D-nucleotide.. Its function is as follows. DNA ligase that catalyzes the formation of phosphodiester linkages between 5'-phosphoryl and 3'-hydroxyl groups in double-stranded DNA using NAD as a coenzyme and as the energy source for the reaction. It is essential for DNA replication and repair of damaged DNA. The polypeptide is DNA ligase (Corynebacterium glutamicum (strain R)).